We begin with the raw amino-acid sequence, 313 residues long: Postacrosomal sheath WW domain-binding protein (313 aa).

Residues T8–Q87 enclose the GRAM domain. 12 tandem repeats follow at residues Y179–G185, Y193–G199, Y207–G213, Y214–G220, Y221–G227, Y228–G234, Y235–G241, Y242–G248, Y249–G255, Y256–G262, Y263–G269, and Y270–G276. Positions Y179 to G276 are 12 X 7 AA tandem repeat of Y-G-X-P-P-X-G. The PPxY motif 1 motif lies at P183–Y186. A compositionally biased stretch (gly residues) spans G254–G264. The tract at residues G254–S313 is disordered. Residues A265 to G276 show a composition bias toward low complexity. Positions P281–Y284 match the PPxY motif 2 motif. Positions A289–S313 are enriched in polar residues.

In terms of tissue distribution, expressed in testis.

In terms of biological role, may play a role in meiotic resumption and pronuclear formation, mediated by a WW domain-signaling pathway during fertilization. The chain is Postacrosomal sheath WW domain-binding protein (WBP2NL) from Bos taurus (Bovine).